Consider the following 183-residue polypeptide: Inosine/xanthosine triphosphatase (183 aa).

Asp-75 is a Mg(2+) binding site. Residue 75–76 (DG) coordinates substrate.

This sequence belongs to the YjjX NTPase family. Homodimer. It depends on Mg(2+) as a cofactor. The cofactor is Mn(2+).

The catalysed reaction is XTP + H2O = XDP + phosphate + H(+). It catalyses the reaction ITP + H2O = IDP + phosphate + H(+). Functionally, phosphatase that hydrolyzes non-canonical purine nucleotides such as XTP and ITP to their respective diphosphate derivatives. Probably excludes non-canonical purines from DNA/RNA precursor pool, thus preventing their incorporation into DNA/RNA and avoiding chromosomal lesions. This chain is Inosine/xanthosine triphosphatase, found in Vibrio vulnificus (strain CMCP6).